Consider the following 135-residue polypeptide: ATP synthase epsilon chain (135 aa).

It belongs to the ATPase epsilon chain family. As to quaternary structure, F-type ATPases have 2 components, CF(1) - the catalytic core - and CF(0) - the membrane proton channel. CF(1) has five subunits: alpha(3), beta(3), gamma(1), delta(1), epsilon(1). CF(0) has three main subunits: a, b and c.

It localises to the cell inner membrane. Its function is as follows. Produces ATP from ADP in the presence of a proton gradient across the membrane. The sequence is that of ATP synthase epsilon chain from Hyphomonas neptunium (strain ATCC 15444).